We begin with the raw amino-acid sequence, 377 residues long: Dihydroorotase, mitochondrial (377 aa).

Zn(2+) contacts are provided by His44, His46, Lys130, His168, and His206. Lys130 carries the N6-carboxylysine modification. Ser223 is subject to Phosphoserine. Asp280 contacts Zn(2+).

It belongs to the metallo-dependent hydrolases superfamily. DHOase family. Class II DHOase subfamily. Zn(2+) is required as a cofactor.

Its subcellular location is the mitochondrion. The enzyme catalyses (S)-dihydroorotate + H2O = N-carbamoyl-L-aspartate + H(+). It participates in pyrimidine metabolism; UMP biosynthesis via de novo pathway; (S)-dihydroorotate from bicarbonate: step 3/3. The chain is Dihydroorotase, mitochondrial (PYR4) from Arabidopsis thaliana (Mouse-ear cress).